Here is a 736-residue protein sequence, read N- to C-terminus: uncharacterized protein (736 aa).

2 ABC transporter domains span residues 183-459 (IKID…KQME) and 518-734 (LQMS…TMTI). Residues 215 to 222 (GRNGIGKS) and 551 to 558 (GPNGAGKS) each bind ATP.

Belongs to the ABC transporter superfamily.

The protein resides in the cytoplasm. This is an uncharacterized protein from Schizosaccharomyces pombe (strain 972 / ATCC 24843) (Fission yeast).